The following is an 855-amino-acid chain: MVVMARVPRSERPDLVFEEEDLPYEEEIMRNQFSVKCWLRYIEFKQGAPKPRLNQLYERALKLLPCSYKLWYRYLKARRAQVKHRCVTDPAYEDVNNCHERAFVFMHKMPRLWLDYCQFLMDQGRVTHTRRTFDRALRALPITQHSRIWPLYLRFLRSHPLPETAVRGYRRFLKLSPESAEEYIEYLKSSDRLDEAAQRLATVVNDERFVSKAGKSNYQLWHELCDLISQNPDKVQSLNVDAIIRGGLTRFTDQLGKLWCSLADYYIRSGHFEKARDVYEEAIRTVMTVRDFTQVFDSYAQFEESMIAAKMETASELGREEEDDVDLELRLARFEQLISRRPLLLNSVLLRQNPHHVHEWHKRVALHQGRPREIINTYTEAVQTVDPFKATGKPHTLWVAFAKFYEDNGQLDDARVILEKATKVNFKQVDDLASVWCQCGELELRHENYDEALKLLRKATALPARRAEYFDGSEPVQNRVYKSLKVWSMLADLEESLGTFQSTKAVYDRILDLRIATPQIVINYAMFLEEHKYFEESFKAYERGISLFKWPNVSDIWSTYLTKFISRYGGRKLERARDLFEQALDGCPPKYAKTLYLLYAQLEEEWGLARHAMAVYDRATRAVEPAQQYDMFNIYIKRAAEIYGVTHTRGIYQKAIEVLSDEHAREMCLRFADMECKLGEIDRARAIYSFCSQICDPRTTGAFWQTWKDFEVRHGNEDTIREMLRIRRSVQATYNTQVNFMASQMLKVSGSATGTVSDLAPGQSGMDDMKLLEQRAEQLAAEAERDQPPRAQSKIFFVRSDASREELAELAQQANPEEIQLGEDEDEDEMDLEPNEVRLEQQSVPAAVFGSLKED.

HAT repeat units follow at residues 15–47, 48–80, 90–122, 124–158, 160–192, 198–230, 235–268, 270–305, and 369–407; these read LVFE…FKQG, APKP…ARRA, PAYE…FLMD, GRVT…FLRS, PLPE…SSDR, QRLA…LISQ, VQSL…YYIR, GHFE…FEES, and GRPR…FYED. At lysine 420 the chain carries N6-acetyllysine. HAT repeat units lie at residues 498–530, 532–566, 571–605, 643–677, and 679–713; these read GTFQ…FLEE, KYFE…KFIS, RKLE…LEEE, YGVT…MECK, and GEID…FEVR. The segment at 808-855 is disordered; it reads AELAQQANPEEIQLGEDEDEDEMDLEPNEVRLEQQSVPAAVFGSLKED. Residues 820–834 are compositionally biased toward acidic residues; it reads QLGEDEDEDEMDLEP. The residue at position 851 (serine 851) is a Phosphoserine.

This sequence belongs to the crooked-neck family. As to quaternary structure, associates with RNA polymerase II, the TCR-specific proteins CKN1/CSA and ERCC6/CSB, and XPA. Identified in the spliceosome C complex. Component of the XAB2 complex, a multimeric protein complex composed of XAB2, PRPF19, AQR, ZNF830, ISY1, and PPIE. Identified in a pentameric intron-binding (IB) complex composed of AQR, XAB2, ISY1, ZNF830 and PPIE that is incorporated into the spliceosome as a preassembled complex. The IB complex does not contain PRPF19.

Its subcellular location is the nucleus. In terms of biological role, involved in pre-mRNA splicing as component of the spliceosome. Involved in transcription-coupled repair (TCR), transcription and pre-mRNA splicing. This chain is Pre-mRNA-splicing factor SYF1 (Xab2), found in Mus musculus (Mouse).